The following is a 1059-amino-acid chain: RNA-binding protein 26 (1059 aa).

Composition is skewed to basic and acidic residues over residues 98–114 (EKEI…EKEK) and 130–147 (RHKD…DRES). The tract at residues 98–275 (EKEIKKDEVN…PVDNSYASGS (178 aa)) is disordered. A compositionally biased stretch (polar residues) spans 172-182 (LNSNKVQNAKN). Residues 184 to 213 (RSRDDRKRDDRFRKREYDRNVPRRDSYRDR) are compositionally biased toward basic and acidic residues. A compositionally biased stretch (basic residues) spans 214-231 (YNRRRGRSRSYSRSRSRS). The span at 232 to 266 (WSKERQRDRDRSRSRTRSRDKDSGKPKFDLDRPDP) shows a compositional bias: basic and acidic residues. The C3H1-type zinc-finger motif lies at 327 to 355 (QMQKKRCRDYDEKGFCMRGDMCPFDHGSD). A compositionally biased stretch (pro residues) spans 375-428 (PVLEGPPPPGLPPPPSLLTPPPVNLQPPPVPPPGPLPPSLPPVTGPPPPLPPLQ). Positions 375–443 (PVLEGPPPPG…APPNSATSSV (69 aa)) are disordered. The span at 434 to 443 (APPNSATSSV) shows a compositional bias: low complexity. Residues 581 to 655 (TKLELRRIPP…RFIRMYWHRE (75 aa)) enclose the RRM 1 domain. A coiled-coil region spans residues 771–873 (GDAQKKKQEA…LLDTELDLYN (103 aa)). Residues 942-1011 (RALKISGFTE…QDLKLAWNKP (70 aa)) form the RRM 2 domain. The disordered stretch occupies residues 1010-1059 (KPVPNASSTEVEDADQEEEEFHEDSIVDDSLLQDDDEEEEDDNESRSWRR). 2 stretches are compositionally biased toward acidic residues: residues 1019-1031 (EVED…EEFH) and 1040-1052 (LLQD…EDDN).

Functionally, may be involved in the turnover of nuclear polyadenylated (pA+) RNA. The sequence is that of RNA-binding protein 26 from Xenopus laevis (African clawed frog).